The chain runs to 335 residues: DNA-directed RNA polymerase subunit alpha (335 aa).

The segment at 1–233 (MTAVNDFLTP…QQIAVFVDLE (233 aa)) is alpha N-terminal domain (alpha-NTD). Residues 247–335 (IDPILLRPVD…DDDRLNAKLR (89 aa)) are alpha C-terminal domain (alpha-CTD).

It belongs to the RNA polymerase alpha chain family. In terms of assembly, homodimer. The RNAP catalytic core consists of 2 alpha, 1 beta, 1 beta' and 1 omega subunit. When a sigma factor is associated with the core the holoenzyme is formed, which can initiate transcription.

The enzyme catalyses RNA(n) + a ribonucleoside 5'-triphosphate = RNA(n+1) + diphosphate. Its function is as follows. DNA-dependent RNA polymerase catalyzes the transcription of DNA into RNA using the four ribonucleoside triphosphates as substrates. In Alcanivorax borkumensis (strain ATCC 700651 / DSM 11573 / NCIMB 13689 / SK2), this protein is DNA-directed RNA polymerase subunit alpha.